Reading from the N-terminus, the 809-residue chain is Penicillin-binding protein 1A (809 aa).

The Cytoplasmic portion of the chain corresponds to 1–34; the sequence is MSDNTKTNSRNKSVKRTKKVKKKKKFGFFKKLFT. Residues 35 to 55 form a helical; Signal-anchor for type II membrane protein membrane-spanning segment; it reads ILFCLFILLSVAASGVIFAIV. The Extracellular segment spans residues 56-809; it reads KTSPNLDING…PNNNTTNTNK (754 aa). Residues 74 to 251 are transglycosylase; that stretch reads SQLYDDNNNP…PSAYYPFSQN (178 aa). E113 serves as the catalytic Proton donor; for transglycosylase activity. The transpeptidase stretch occupies residues 381-664; the sequence is AAATLFDYHT…VAEIWGEIMK (284 aa). The active-site Acyl-ester intermediate; for transpeptidase activity is S422. Residues 694-809 form a disordered region; sequence SPSNLSGDDS…PNNNTTNTNK (116 aa).

In the N-terminal section; belongs to the glycosyltransferase 51 family. It in the C-terminal section; belongs to the transpeptidase family.

It localises to the cell membrane. It catalyses the reaction [GlcNAc-(1-&gt;4)-Mur2Ac(oyl-L-Ala-gamma-D-Glu-L-Lys-D-Ala-D-Ala)](n)-di-trans,octa-cis-undecaprenyl diphosphate + beta-D-GlcNAc-(1-&gt;4)-Mur2Ac(oyl-L-Ala-gamma-D-Glu-L-Lys-D-Ala-D-Ala)-di-trans,octa-cis-undecaprenyl diphosphate = [GlcNAc-(1-&gt;4)-Mur2Ac(oyl-L-Ala-gamma-D-Glu-L-Lys-D-Ala-D-Ala)](n+1)-di-trans,octa-cis-undecaprenyl diphosphate + di-trans,octa-cis-undecaprenyl diphosphate + H(+). It carries out the reaction Preferential cleavage: (Ac)2-L-Lys-D-Ala-|-D-Ala. Also transpeptidation of peptidyl-alanyl moieties that are N-acyl substituents of D-alanine.. It functions in the pathway cell wall biogenesis; peptidoglycan biosynthesis. Its function is as follows. Cell wall formation. Synthesis of cross-linked peptidoglycan from the lipid intermediates. The enzyme has a penicillin-insensitive transglycosylase N-terminal domain (formation of linear glycan strands) and a penicillin-sensitive transpeptidase C-terminal domain (cross-linking of the peptide subunits). This chain is Penicillin-binding protein 1A (pbpA), found in Clostridium acetobutylicum (strain ATCC 824 / DSM 792 / JCM 1419 / IAM 19013 / LMG 5710 / NBRC 13948 / NRRL B-527 / VKM B-1787 / 2291 / W).